A 546-amino-acid polypeptide reads, in one-letter code: Cholesterol oxidase (546 aa).

A signal peptide (tat-type signal) is located at residues 1–42; it reads MTAQQHLSRRRMLGMAAFGAAALAGGTTIAAPRAAAAAKSAA. Positions 57, 58, 77, 152, 156, 157, 159, and 287 each coordinate FAD. Catalysis depends on proton acceptor residues E398 and H484. FAD contacts are provided by G512 and F524.

The protein belongs to the GMC oxidoreductase family. Monomer. The cofactor is FAD. Predicted to be exported by the Tat system. The position of the signal peptide cleavage has been experimentally proven.

The protein resides in the secreted. The enzyme catalyses cholesterol + O2 = cholest-5-en-3-one + H2O2. The catalysed reaction is cholest-5-en-3-one = cholest-4-en-3-one. Its pathway is steroid metabolism; cholesterol degradation. In terms of biological role, bifunctional enzyme that catalyzes the oxidation and isomerization of cholesterol to cholestenone (cholest-4-en-3-one), an initial step in the cholesterol degradation process. The cholesterol degradation pathway allows the bacterium to utilize cholesterol as its sole source of carbon and energy. This chain is Cholesterol oxidase, found in Streptomyces sp. (strain SA-COO).